The chain runs to 263 residues: Phosphonates import ATP-binding protein PhnC 1 (263 aa).

Positions 3–248 constitute an ABC transporter domain; the sequence is IQVENLWVAF…KEKELYFGEK (246 aa). 37-44 contributes to the ATP binding site; it reads GPSGAGKS.

The protein belongs to the ABC transporter superfamily. Phosphonates importer (TC 3.A.1.9.1) family. As to quaternary structure, the complex is composed of two ATP-binding proteins (PhnC), two transmembrane proteins (PhnE) and a solute-binding protein (PhnD).

The protein localises to the cell inner membrane. The enzyme catalyses phosphonate(out) + ATP + H2O = phosphonate(in) + ADP + phosphate + H(+). Part of the ABC transporter complex PhnCDE involved in phosphonates import. Responsible for energy coupling to the transport system. This Synechococcus sp. (strain JA-2-3B'a(2-13)) (Cyanobacteria bacterium Yellowstone B-Prime) protein is Phosphonates import ATP-binding protein PhnC 1.